Here is a 303-residue protein sequence, read N- to C-terminus: Protein bottleneck (303 aa).

2 disordered regions span residues 102-142 (SKRN…PTVT) and 185-272 (VATT…ASVR). Low complexity-rich tracts occupy residues 115 to 138 (RQQE…QQQE) and 185 to 197 (VATT…TANS). The segment covering 260–272 (ATISRQSSSASVR) has biased composition (polar residues).

As to expression, restricted to the blastoderm.

The protein localises to the cytoplasm. It is found in the cytoskeleton. Functionally, acts as a regulator of the microfilament network governing cellularization of the embryo. Determines the timing of a key conformational transition in the cortical microfilament network: the proper coordination of membrane invagination and basal closure of the cells. To do this, bnk possibly physically links neighboring contractile units of the early cycle 14 microfilament network in a manner that prevents basal constriction until the proper stage has been reached. Bnk together with nullo and Sry-alpha may provide auxiliary functions, by acting both to stabilize a large and dynamic microfilament structure and regulate its functions. The protein is Protein bottleneck (bnk) of Drosophila melanogaster (Fruit fly).